The primary structure comprises 549 residues: Probable glucomannan 4-beta-mannosyltransferase 4 (549 aa).

The chain crosses the membrane as a helical span at residues 35–55; sequence VAPVLQFAVWACMAMSVMLVL. The active site involves Asp-151. Substrate-binding residues include Asp-210 and Asp-212. The active site involves Asp-304. 4 helical membrane-spanning segments follow: residues 383 to 403, 406 to 426, 497 to 517, and 523 to 543; these read VVAPILTFLFYCVVIPLSVMV, VSIPVWGMVYIPTAITIMNAI, IYIPELMVAFYLLVCASYDLV, and YYLYIYLQAFAFIALGFGFAG.

The protein belongs to the glycosyltransferase 2 family. Plant cellulose synthase-like A subfamily.

It is found in the golgi apparatus membrane. It carries out the reaction GDP-mannose + (glucomannan)n = GDP + (glucomannan)n+1.. Probable mannan synthase which consists of a 4-beta-mannosyltransferase activity on mannan using GDP-mannose. The beta-1,4-mannan product is the backbone for galactomannan synthesis by galactomannan galactosyltransferase. Galactomannan is a noncellulosic polysaccharides of plant cell wall. The chain is Probable glucomannan 4-beta-mannosyltransferase 4 from Oryza sativa subsp. japonica (Rice).